The primary structure comprises 451 residues: Protein NINJA homolog 1 (451 aa).

Disordered stretches follow at residues M1–P223, I321–K346, and D427–N451. Over residues K23 to P35 the composition is skewed to basic and acidic residues. 3 stretches are compositionally biased toward polar residues: residues E38–P49, P86–V103, and I143–G153. Acidic residues predominate over residues E154 to A163. The segment covering S207–G216 has biased composition (low complexity).

It belongs to the Ninja family. As to quaternary structure, interacts with TIFY10C/JAZ8. Interacts with TIFY11A/JAZ9.

The protein resides in the nucleus. The protein is Protein NINJA homolog 1 of Oryza sativa subsp. japonica (Rice).